The sequence spans 68 residues: Large ribosomal subunit protein uL29 (68 aa).

Belongs to the universal ribosomal protein uL29 family.

The chain is Large ribosomal subunit protein uL29 from Chlorobaculum tepidum (strain ATCC 49652 / DSM 12025 / NBRC 103806 / TLS) (Chlorobium tepidum).